The chain runs to 658 residues: ATP-dependent RNA helicase DDX3Y (658 aa).

Basic and acidic residues predominate over residues 1 to 10 (MSHVVVKNDP). The disordered stretch occupies residues 1-141 (MSHVVVKNDP…DDWSKPLPPS (141 aa)). Serine 2 bears the N-acetylserine mark. Positions 15–34 (QLANLDLNSEKQSGGASTAS) are enriched in polar residues. A compositionally biased stretch (basic and acidic residues) spans 44-68 (RNREASKGFHDKDSSGWSCSKDKDA). Lysine 55 is modified (N6-acetyllysine). Residues serine 81, serine 85, and serine 89 each carry the phosphoserine modification. Residues 93 to 128 (GRFDDRGRSDYDGIGNRDRPGFGRFERSGHSRWCDK) show a composition bias toward basic and acidic residues. The residue at position 100 (arginine 100) is an Omega-N-methylarginine. Serine 101 is modified (phosphoserine). At tyrosine 103 the chain carries Phosphotyrosine. An Omega-N-methylarginine modification is found at arginine 109. Residues serine 129 and serine 181 each carry the phosphoserine modification. The Q motif signature appears at 178–206 (ENFSDIDMGEIIMGNIELTRYTRPTPVQK). 198 to 205 (YTRPTPVQ) contacts ATP. Residues 209–401 (IPIIKGKRDL…RDFLDEYIFL (193 aa)) enclose the Helicase ATP-binding domain. Residue lysine 213 forms a Glycyl lysine isopeptide (Lys-Gly) (interchain with G-Cter in SUMO2) linkage. 222-229 (AQTGSGKT) contacts ATP. The short motif at 345-348 (DEAD) is the DEAD box element. The region spanning 412–573 (NITQKVVWVE…EVPSWLENMA (162 aa)) is the Helicase C-terminal domain. Residue serine 454 is modified to Phosphoserine. Omega-N-methylarginine is present on arginine 588. 2 positions are modified to phosphoserine: serine 590 and serine 601. The tract at residues 597 to 625 (DYRQSSGSSSSGFGASRGSSSRSGGSGYG) is disordered. Positions 601–619 (SSGSSSSGFGASRGSSSRS) are enriched in low complexity. Omega-N-methylarginine occurs at positions 613 and 628.

Belongs to the DEAD box helicase family. DDX3/DED1 subfamily. In terms of assembly, may interact with TDRD3.

The protein localises to the cytoplasm. The protein resides in the nucleus. It carries out the reaction ATP + H2O = ADP + phosphate + H(+). Its function is as follows. Probable ATP-dependent RNA helicase. May play a role in spermatogenesis. In Pongo abelii (Sumatran orangutan), this protein is ATP-dependent RNA helicase DDX3Y (DDX3Y).